A 70-amino-acid polypeptide reads, in one-letter code: Envelope small membrane protein (70 aa).

Glycine 2 carries N-myristoyl glycine; by host lipidation. The endoplasmic reticulum retention signal stretch occupies residues 2-15 (GSLWSKISQLFVDA). Over 2 to 25 (GSLWSKISQLFVDAFTEFLVSVVD) the chain is Virion surface. A helical transmembrane segment spans residues 26–46 (IAIFLAILFGFTVAGWLLVFL). Topologically, residues 47–70 (LRVVCSALLRSRSAIHSPELSKVL) are intravirion.

It belongs to the arteriviridae E protein family. Homooligomer. Associates with itself into higher-order structures, including dimers, trimers and tetramers. Associates with the GP2a-GP3-GP4 complex. Myristoylated. In terms of processing, not glycosylated.

Its subcellular location is the virion membrane. It localises to the host endoplasmic reticulum membrane. It is found in the host Golgi apparatus membrane. The protein localises to the secreted. Minor envelope protein. May function as a viroporin in the virion envelope that facilitates uncoating of the virus in order to release the genomic RNA into the cytoplasm for subsequent replication. This is Envelope small membrane protein (GP2b) from Sus scrofa (Pig).